The following is a 145-amino-acid chain: Brain and acute leukemia cytoplasmic protein (145 aa).

The N-myristoyl glycine moiety is linked to residue G2. Residue C3 is the site of S-palmitoyl cysteine attachment. Positions 3 to 35 are interaction with CAMK2A; the sequence is CGGSRADAIEPRYYESWTRETESTWLTYTDSDA. Residues 27–119 are disordered; it reads WLTYTDSDAP…AKRDAKRMPA (93 aa). The span at 32-46 shows a compositional bias: low complexity; sequence DSDAPPSAAAPDSGP. Polar residues predominate over residues 83–108; sequence CETQCPNPQSLSSGPLTQKQNGLQTT. Positions 109 to 119 are enriched in basic and acidic residues; the sequence is EAKRDAKRMPA.

Interacts with CAMK2A. Palmitoylation and myristoylation target the protein to the lipid rafts. As to expression, predominantly expressed in neuroectoderm-derived tissues. Expressed in the brain and spinal cord, and at low levels, in the adrenal gland. In the bone marrow, confined to the CD34+ progenitor cells. Not found in peripheral blood mononuclear cells, nor lymph nodes. Tends to be expressed at high levels in acute myeloid leukemia and glioblastoma cells.

It localises to the cytoplasm. Its subcellular location is the synapse. It is found in the synaptosome. The protein resides in the membrane raft. The protein localises to the postsynaptic density. Its function is as follows. May play a synaptic role at the postsynaptic lipid rafts possibly through interaction with CAMK2A. This chain is Brain and acute leukemia cytoplasmic protein, found in Homo sapiens (Human).